We begin with the raw amino-acid sequence, 170 residues long: M-agglutinin (170 aa).

An N-terminal signal peptide occupies residues 1–24; sequence MNLKKIAIASSVFAGITMALTCHA.

This protein is a non-fimbrial hemagglutinin that is specific for blood group M. This Escherichia coli protein is M-agglutinin (bmaE).